Consider the following 147-residue polypeptide: 3-dehydroquinate dehydratase (147 aa).

Y23 (proton acceptor) is an active-site residue. Residues N75, H81, and D88 each coordinate substrate. The active-site Proton donor is the H101. Residues 102-103 (LS) and R112 contribute to the substrate site.

This sequence belongs to the type-II 3-dehydroquinase family. In terms of assembly, homododecamer.

The enzyme catalyses 3-dehydroquinate = 3-dehydroshikimate + H2O. The protein operates within metabolic intermediate biosynthesis; chorismate biosynthesis; chorismate from D-erythrose 4-phosphate and phosphoenolpyruvate: step 3/7. In terms of biological role, catalyzes a trans-dehydration via an enolate intermediate. The protein is 3-dehydroquinate dehydratase of Stenotrophomonas maltophilia (strain K279a).